A 414-amino-acid chain; its full sequence is Probable 1-acylglycerol-3-phosphate O-acyltransferase (414 aa).

The region spanning 117–382 is the AB hydrolase-1 domain; sequence PTLVMVHGYG…GGHFVFIDNP (266 aa). The GXSXG signature appears at 193 to 197; that stretch reads GHSFG. Positions 375–380 match the HXXXXD motif motif; it reads HFVFID.

This sequence belongs to the peptidase S33 family. ABHD4/ABHD5 subfamily.

It is found in the cytoplasm. It catalyses the reaction a 1-acyl-sn-glycero-3-phosphate + an acyl-CoA = a 1,2-diacyl-sn-glycero-3-phosphate + CoA. Its function is as follows. Lysophosphatidic acid acyltransferase which functions in phosphatidic acid biosynthesis. May regulate neutral lipid accumulation and participate in the regulation of lipid turnover in vegetative cells. May possess additional triacylglycerol lipase and phospholipase A2 activities in vitro. The protein is Probable 1-acylglycerol-3-phosphate O-acyltransferase of Oryza sativa subsp. japonica (Rice).